A 93-amino-acid polypeptide reads, in one-letter code: Small ribosomal subunit protein uS19c (93 aa).

The protein belongs to the universal ribosomal protein uS19 family.

It is found in the plastid. It localises to the chloroplast. Functionally, protein S19 forms a complex with S13 that binds strongly to the 16S ribosomal RNA. This is Small ribosomal subunit protein uS19c from Tetradesmus obliquus (Green alga).